A 93-amino-acid chain; its full sequence is Small ribosomal subunit protein bS6 (93 aa).

This sequence belongs to the bacterial ribosomal protein bS6 family.

Binds together with bS18 to 16S ribosomal RNA. In Phytoplasma australiense, this protein is Small ribosomal subunit protein bS6.